The primary structure comprises 275 residues: Lectin (275 aa).

Residues 1 to 30 form the signal peptide; the sequence is MASLQTQMISFYLIFLSILLTTIFFFKVNS. Residues aspartate 111 and glycine 129 each contribute to the D-glucose site. Mn(2+) is bound by residues glutamate 149 and aspartate 151. Positions 151, 153, 155, and 159 each coordinate Ca(2+). Residues aspartate 159 and histidine 166 each coordinate Mn(2+). A propeptide spanning residues 211 to 217 is cleaved from the precursor; the sequence is NSLEEEN. D-glucose-binding residues include glycine 246 and alanine 247. A propeptide spanning residues 270-275 is cleaved from the precursor; sequence KQAADA.

It belongs to the leguminous lectin family. As to quaternary structure, heterotetramer of two alpha and two beta chains. The mature form consists of two chains, alpha and beta, produced by cleavage of the immature protein. These remain cleaved, yet fold together to form one subunit.

D-mannose specific lectin. The protein is Lectin of Lens culinaris (Lentil).